A 300-amino-acid chain; its full sequence is Light-independent protochlorophyllide reductase iron-sulfur ATP-binding protein (300 aa).

ATP-binding positions include 10-15 (GIGKST) and Lys-39. Ser-14 is a Mg(2+) binding site. Cys-95 and Cys-129 together coordinate [4Fe-4S] cluster. 180–181 (NR) contributes to the ATP binding site.

Belongs to the NifH/BchL/ChlL family. As to quaternary structure, homodimer. Protochlorophyllide reductase is composed of three subunits; ChlL, ChlN and ChlB. It depends on [4Fe-4S] cluster as a cofactor.

The protein localises to the plastid. Its subcellular location is the chloroplast. The catalysed reaction is chlorophyllide a + oxidized 2[4Fe-4S]-[ferredoxin] + 2 ADP + 2 phosphate = protochlorophyllide a + reduced 2[4Fe-4S]-[ferredoxin] + 2 ATP + 2 H2O. It functions in the pathway porphyrin-containing compound metabolism; chlorophyll biosynthesis (light-independent). In terms of biological role, component of the dark-operative protochlorophyllide reductase (DPOR) that uses Mg-ATP and reduced ferredoxin to reduce ring D of protochlorophyllide (Pchlide) to form chlorophyllide a (Chlide). This reaction is light-independent. The L component serves as a unique electron donor to the NB-component of the complex, and binds Mg-ATP. The chain is Light-independent protochlorophyllide reductase iron-sulfur ATP-binding protein from Auxenochlorella protothecoides (Green microalga).